The sequence spans 730 residues: Hemolytic phospholipase C (730 aa).

The segment at residues 1–38 (MTENWKFRRRTFLKHGAQAATLAGLSGLFPETLRRALA) is a signal peptide (tat-type signal).

This sequence belongs to the bacterial phospholipase C family. Post-translationally, predicted to be exported by the Tat system. The position of the signal peptide cleavage has not been experimentally proven.

The enzyme catalyses a 1,2-diacyl-sn-glycero-3-phosphocholine + H2O = phosphocholine + a 1,2-diacyl-sn-glycerol + H(+). Functionally, hydrolyzes sphingomyelin in addition to phosphatidylcholine. The protein is Hemolytic phospholipase C (plcH) of Pseudomonas aeruginosa (strain ATCC 15692 / DSM 22644 / CIP 104116 / JCM 14847 / LMG 12228 / 1C / PRS 101 / PAO1).